Reading from the N-terminus, the 302-residue chain is uncharacterized protein (302 aa).

The next 10 membrane-spanning stretches (helical) occupy residues 13–32 (GILLAISAYTMWGIAPIYFK), 42–64 (ILSHRVVWSFVLLAVLIHLGRRW), 77–96 (FWLLLVTALLVGGNWLIFIW), 106–125 (ASLGYYINPLLNVLLGMLFL), 132–150 (LQWFAVALAAIGVGIQLVV), 154–171 (VPIVAIALATSFGFYGLL), 183–202 (LFLETLFMLPAAAIYLIWLA), 217–239 (NLLLVCAGVVTTLPLLCFTGAAA), 246–265 (LGFFQYIGPSLMFLLAVLVY), and 275–297 (ITFAFIWSALVIFSVDGLKAGHA). In terms of domain architecture, EamA spans 22–149 (TMWGIAPIYF…AAIGVGIQLV (128 aa)).

Belongs to the EamA transporter family.

It is found in the cell membrane. This is an uncharacterized protein from Vibrio cholerae serotype O1 (strain ATCC 39315 / El Tor Inaba N16961).